A 1167-amino-acid polypeptide reads, in one-letter code: Non-toxic nonhemagglutinin (1167 aa).

The tract at residues 1-381 is light chain nLC; sequence MDIIDNVDIT…PQQIINLIDN (381 aa). Residues 382-804 are N-heavy chain nHN; it reads NNILLIKSYI…LFNSKIQLTI (423 aa). Positions 805–1167 are C-heavy chain nHC; the sequence is KNEKPEYNLL…LNDIYSWTLI (363 aa).

It belongs to the botulism non-toxic nonhemagglutinin family.

Functionally, expression of the ptox operon (ntnh-orfX1-orfX2-orfX3-pmp1) in B.thuringiensis kills Anopheles but not Aedes mosquito 3rd instar larvae. The ntnh-pmp1 construct is about half as toxic. The sequence is that of Non-toxic nonhemagglutinin from Paraclostridium bifermentans (Clostridium bifermentans).